The primary structure comprises 229 residues: Cytidylate kinase (229 aa).

Residue 12–20 (GPSGAGKGT) coordinates ATP.

Belongs to the cytidylate kinase family. Type 1 subfamily.

It localises to the cytoplasm. The enzyme catalyses CMP + ATP = CDP + ADP. It carries out the reaction dCMP + ATP = dCDP + ADP. This is Cytidylate kinase from Pseudomonas aeruginosa (strain LESB58).